Consider the following 89-residue polypeptide: Small ribosomal subunit protein uS19 (89 aa).

It belongs to the universal ribosomal protein uS19 family.

Its function is as follows. Protein S19 forms a complex with S13 that binds strongly to the 16S ribosomal RNA. The sequence is that of Small ribosomal subunit protein uS19 from Azobacteroides pseudotrichonymphae genomovar. CFP2.